We begin with the raw amino-acid sequence, 1659 residues long: Vitellogenin (1659 aa).

An N-terminal signal peptide occupies residues 1–15 (MRAVVLALTLALVAS). One can recognise a Vitellogenin domain in the interval 24–662 (FAASKTYVYK…DAATLFPRTV (639 aa)). Asparagine 1089 carries an N-linked (GlcNAc...) asparagine glycan. Low complexity-rich tracts occupy residues 1090–1111 (GTRASSSSSSSSSSSSRSSSSR) and 1119–1129 (SSSSSSSSSSR). Positions 1090-1163 (GTRASSSSSS…SQSTSNVISR (74 aa)) are disordered. The VWFD domain maps to 1389-1565 (VKCSMVRDTL…SWVLPSDSCR (177 aa)). 2 disulfides stabilise this stretch: cysteine 1391–cysteine 1528 and cysteine 1414–cysteine 1564. Asparagine 1627 is a glycosylation site (N-linked (GlcNAc...) asparagine).

Post-translationally, phosvitin, an egg yolk storage protein, is one of the most highly phosphorylated (10%) proteins in nature. Produced by the liver, secreted into the blood and then sequestered by receptor mediated endocytosis into growing oocytes, where it is generally cleaved, giving rise to the respective yolk components lipovitellin-I, phosvitin, lipovitellin-II.

Functionally, precursor of the major egg-yolk proteins that are sources of nutrients during early development of oviparous organisms. The protein is Vitellogenin (vtg1) of Oncorhynchus mykiss (Rainbow trout).